The chain runs to 459 residues: Glutamate--tRNA ligase 2 (459 aa).

Residues 8–18 carry the 'HIGH' region motif; it reads PSPTGYLHIGG. Positions 237-241 match the 'KMSKS' region motif; sequence KLSKR. ATP is bound at residue K240.

This sequence belongs to the class-I aminoacyl-tRNA synthetase family. Glutamate--tRNA ligase type 1 subfamily. As to quaternary structure, monomer.

Its subcellular location is the cytoplasm. It carries out the reaction tRNA(Glu) + L-glutamate + ATP = L-glutamyl-tRNA(Glu) + AMP + diphosphate. Catalyzes the attachment of glutamate to tRNA(Glu) in a two-step reaction: glutamate is first activated by ATP to form Glu-AMP and then transferred to the acceptor end of tRNA(Glu). The sequence is that of Glutamate--tRNA ligase 2 from Campylobacter curvus (strain 525.92).